We begin with the raw amino-acid sequence, 375 residues long: Chaperone protein DnaJ (375 aa).

The 66-residue stretch at 5-70 (DYYEVLGVNR…QKKGAYDRYG (66 aa)) folds into the J domain. The segment at 134–212 (GAEKTIRIPT…CGGAGRVKKQ (79 aa)) adopts a CR-type zinc-finger fold. Zn(2+) contacts are provided by cysteine 147, cysteine 150, cysteine 164, cysteine 167, cysteine 186, cysteine 189, cysteine 200, and cysteine 203. 4 CXXCXGXG motif repeats span residues 147 to 154 (CGTCHGSG), 164 to 171 (CPTCGGAG), 186 to 193 (CPKCHGTG), and 200 to 207 (CGDCGGAG).

Belongs to the DnaJ family. In terms of assembly, homodimer. Zn(2+) is required as a cofactor.

Its subcellular location is the cytoplasm. Its function is as follows. Participates actively in the response to hyperosmotic and heat shock by preventing the aggregation of stress-denatured proteins and by disaggregating proteins, also in an autonomous, DnaK-independent fashion. Unfolded proteins bind initially to DnaJ; upon interaction with the DnaJ-bound protein, DnaK hydrolyzes its bound ATP, resulting in the formation of a stable complex. GrpE releases ADP from DnaK; ATP binding to DnaK triggers the release of the substrate protein, thus completing the reaction cycle. Several rounds of ATP-dependent interactions between DnaJ, DnaK and GrpE are required for fully efficient folding. Also involved, together with DnaK and GrpE, in the DNA replication of plasmids through activation of initiation proteins. This Azoarcus sp. (strain BH72) protein is Chaperone protein DnaJ.